A 399-amino-acid polypeptide reads, in one-letter code: Succinate--CoA ligase [ADP-forming] subunit beta (399 aa).

Residues K9–E254 form the ATP-grasp domain. ATP-binding positions include K46, G53–G55, E109, A112, and E117. 2 residues coordinate Mg(2+): N209 and D223. Residues N274 and G331–M333 each bind substrate.

The protein belongs to the succinate/malate CoA ligase beta subunit family. In terms of assembly, heterotetramer of two alpha and two beta subunits. Requires Mg(2+) as cofactor.

It carries out the reaction succinate + ATP + CoA = succinyl-CoA + ADP + phosphate. It catalyses the reaction GTP + succinate + CoA = succinyl-CoA + GDP + phosphate. It participates in carbohydrate metabolism; tricarboxylic acid cycle; succinate from succinyl-CoA (ligase route): step 1/1. Its function is as follows. Succinyl-CoA synthetase functions in the citric acid cycle (TCA), coupling the hydrolysis of succinyl-CoA to the synthesis of either ATP or GTP and thus represents the only step of substrate-level phosphorylation in the TCA. The beta subunit provides nucleotide specificity of the enzyme and binds the substrate succinate, while the binding sites for coenzyme A and phosphate are found in the alpha subunit. The chain is Succinate--CoA ligase [ADP-forming] subunit beta from Maricaulis maris (strain MCS10) (Caulobacter maris).